The following is a 459-amino-acid chain: MTLHIHNTMTRTKEVFEPLDPGHVRLYVCGPTVYDRAHIGNARPVIVFDLLARLLRRLYPQVTYVRNITDVDDKINARASASGRTIGEITEETTRLFHEDMAELGALPPDVEPRATAHIADMVAMIERLIAKGHAYEAEGHVLFSVPSMGAYGSLSGRSMDDMIAGARVEVAPYKRDPADFVLWKPSDASLPGWDSPWGRGRPGWHIECSAMSSRYLGPSFDIHGGGLDLIFPHHENEIAQSVCCNGPGTFARYWMHNGYLMVEGEKMSKSLGNFVTVRDLLDQAPGEAMRLAMLGTHYRQPFDWTAEGLEQARRGLDRLYSALRRVAGIAASPAEVPEGVMAALCDDLNTPKALAEVYDLLGVLNRATTTEEQAKAKGALLAAGALLGLFQADPEVWLCGAGTGEEEGLAARVEDLICQRKAARQARDFARADAIRDELTQAGIVLEDGPNGTTWRKA.

C29 contacts Zn(2+). Residues 31 to 41 (PTVYDRAHIGN) carry the 'HIGH' region motif. Zn(2+)-binding residues include C209, H234, and E238. The 'KMSKS' region motif lies at 267–271 (KMSKS). Position 270 (K270) interacts with ATP.

It belongs to the class-I aminoacyl-tRNA synthetase family. As to quaternary structure, monomer. It depends on Zn(2+) as a cofactor.

It localises to the cytoplasm. It catalyses the reaction tRNA(Cys) + L-cysteine + ATP = L-cysteinyl-tRNA(Cys) + AMP + diphosphate. The polypeptide is Cysteine--tRNA ligase (Rhodospirillum rubrum (strain ATCC 11170 / ATH 1.1.1 / DSM 467 / LMG 4362 / NCIMB 8255 / S1)).